The following is a 129-amino-acid chain: Large ribosomal subunit protein bL12 (129 aa).

It belongs to the bacterial ribosomal protein bL12 family. Homodimer. Part of the ribosomal stalk of the 50S ribosomal subunit. Forms a multimeric L10(L12)X complex, where L10 forms an elongated spine to which 2 to 4 L12 dimers bind in a sequential fashion. Binds GTP-bound translation factors.

Functionally, forms part of the ribosomal stalk which helps the ribosome interact with GTP-bound translation factors. Is thus essential for accurate translation. The chain is Large ribosomal subunit protein bL12 from Treponema pallidum (strain Nichols).